The following is a 115-amino-acid chain: NAD(P)H-quinone oxidoreductase subunit M (115 aa).

It belongs to the complex I NdhM subunit family. NDH-1 can be composed of about 15 different subunits; different subcomplexes with different compositions have been identified which probably have different functions.

It localises to the cellular thylakoid membrane. It catalyses the reaction a plastoquinone + NADH + (n+1) H(+)(in) = a plastoquinol + NAD(+) + n H(+)(out). The enzyme catalyses a plastoquinone + NADPH + (n+1) H(+)(in) = a plastoquinol + NADP(+) + n H(+)(out). Functionally, NDH-1 shuttles electrons from an unknown electron donor, via FMN and iron-sulfur (Fe-S) centers, to quinones in the respiratory and/or the photosynthetic chain. The immediate electron acceptor for the enzyme in this species is believed to be plastoquinone. Couples the redox reaction to proton translocation, and thus conserves the redox energy in a proton gradient. Cyanobacterial NDH-1 also plays a role in inorganic carbon-concentration. The protein is NAD(P)H-quinone oxidoreductase subunit M of Prochlorococcus marinus (strain SARG / CCMP1375 / SS120).